A 193-amino-acid polypeptide reads, in one-letter code: Ribonuclease HII (193 aa).

Residues 15–193 (CIVAGIDEAG…PYHRRSFRCC (179 aa)) enclose the RNase H type-2 domain. Residues Asp21, Glu22, and Asp112 each coordinate a divalent metal cation.

Belongs to the RNase HII family. Mn(2+) serves as cofactor. Mg(2+) is required as a cofactor.

It is found in the cytoplasm. It catalyses the reaction Endonucleolytic cleavage to 5'-phosphomonoester.. Functionally, endonuclease that specifically degrades the RNA of RNA-DNA hybrids. The sequence is that of Ribonuclease HII from Rickettsia africae (strain ESF-5).